The sequence spans 444 residues: Exodeoxyribonuclease 7 large subunit (444 aa).

The protein belongs to the XseA family. In terms of assembly, heterooligomer composed of large and small subunits.

The protein localises to the cytoplasm. It carries out the reaction Exonucleolytic cleavage in either 5'- to 3'- or 3'- to 5'-direction to yield nucleoside 5'-phosphates.. In terms of biological role, bidirectionally degrades single-stranded DNA into large acid-insoluble oligonucleotides, which are then degraded further into small acid-soluble oligonucleotides. The sequence is that of Exodeoxyribonuclease 7 large subunit from Rickettsia conorii (strain ATCC VR-613 / Malish 7).